The sequence spans 417 residues: Serpin H1 (417 aa).

A signal peptide spans 1–17 (MRSLLLGTLCLLAVALA). Lys-93 is modified (N6-succinyllysine). Residues Asn-119 and Asn-124 are each glycosylated (N-linked (GlcNAc...) asparagine). The residue at position 140 (Ser-140) is a Phosphoserine. Lys-206 carries the post-translational modification N6-acetyllysine. At Lys-295 the chain carries N6-succinyllysine. Lys-318 is modified (N6-acetyllysine). A glycan (N-linked (GlcNAc...) asparagine) is linked at Asn-394. The Prevents secretion from ER motif lies at 414 to 417 (RDEL).

It belongs to the serpin family.

It is found in the endoplasmic reticulum lumen. Functionally, binds specifically to collagen. Could be involved as a chaperone in the biosynthetic pathway of collagen. This is Serpin H1 (Serpinh1) from Rattus norvegicus (Rat).